A 569-amino-acid chain; its full sequence is Laccase-14 (569 aa).

Residues 1–33 (MEFKLNIPNTIIKTLQTIVFFLFVLLAFQIAEA) form the signal peptide. Plastocyanin-like domains lie at 41 to 157 (KIKS…PKRG) and 167 to 320 (REIP…YKGD). Asparagine 87 is a glycosylation site (N-linked (GlcNAc...) asparagine). Cu cation is bound by residues histidine 91, histidine 93, histidine 136, and histidine 138. N-linked (GlcNAc...) asparagine glycosylation is found at asparagine 190, asparagine 249, asparagine 336, asparagine 374, asparagine 395, asparagine 430, and asparagine 452. The region spanning 420–553 (DFPRNPPTKF…NTVFIVKDGP (134 aa)) is the Plastocyanin-like 3 domain. Positions 470, 473, 475, 532, 533, 534, 538, and 543 each coordinate Cu cation.

The protein belongs to the multicopper oxidase family. Cu cation is required as a cofactor. Expressed at low levels in flowers and siliques.

The protein localises to the secreted. It is found in the extracellular space. It localises to the apoplast. The enzyme catalyses 4 hydroquinone + O2 = 4 benzosemiquinone + 2 H2O. Functionally, lignin degradation and detoxification of lignin-derived products. The chain is Laccase-14 (LAC14) from Arabidopsis thaliana (Mouse-ear cress).